The sequence spans 37 residues: Large ribosomal subunit protein bL36 (37 aa).

Belongs to the bacterial ribosomal protein bL36 family.

The protein is Large ribosomal subunit protein bL36 of Nitrosococcus oceani (strain ATCC 19707 / BCRC 17464 / JCM 30415 / NCIMB 11848 / C-107).